The sequence spans 177 residues: Parathyroid hormone-related protein (177 aa).

The first 24 residues, 1–24, serve as a signal peptide directing secretion; that stretch reads MQRRLVQQWSVAVFLLSYAVPSCG. The propeptide occupies 25–34; that stretch reads RSVEGLSRRL. An important for receptor binding region spans residues 57–68; that stretch reads RFFLHHLIAEIH. The segment at 74-177 is disordered; sequence ATSEVSPNSK…TSLELDSRRH (104 aa). The segment covering 76 to 90 has biased composition (polar residues); the sequence is SEVSPNSKPSPNTKN. The Nuclear localization signal motif lies at 108–129; it reads TNKVETYKEQPLKTPGKKKKGK. Basic and acidic residues predominate over residues 109–118; the sequence is NKVETYKEQP. Over residues 122 to 132 the composition is skewed to basic residues; that stretch reads PGKKKKGKPGK.

It belongs to the parathyroid hormone family. As to quaternary structure, interacts with PTH1R (via N-terminal extracellular domain). In terms of processing, there are 3 principal secretory forms, called PTHrP[1-36], PTHrP[38-94], and osteostatin (PTHrP[107-139]) arising from endoproteolytic cleavage of the initial translation product. Each of these secretory forms is believed to have one or more of its own receptors that mediates the normal paracrine, autocrine and endocrine actions. In terms of tissue distribution, ubiquitous. Also expressed in the mammary gland.

Its subcellular location is the secreted. It localises to the cytoplasm. The protein resides in the nucleus. Neuroendocrine peptide which is a critical regulator of cellular and organ growth, development, migration, differentiation and survival and of epithelial calcium ion transport. Acts by binding to its receptor, PTH1R, activating G protein-coupled receptor signaling. Regulates endochondral bone development and epithelial-mesenchymal interactions during the formation of the mammary glands and teeth. Required for skeletal homeostasis. Promotes mammary mesenchyme differentiation and bud outgrowth by modulating mesenchymal cell responsiveness to BMPs. Up-regulates BMPR1A expression in the mammary mesenchyme and this increases the sensitivity of these cells to BMPs and allows them to respond to BMP4 in a paracrine and/or autocrine fashion. BMP4 signaling in the mesenchyme, in turn, triggers epithelial outgrowth and augments MSX2 expression, which causes the mammary mesenchyme to inhibit hair follicle formation within the nipple sheath. Promotes colon cancer cell migration and invasion in an integrin alpha-6/beta-1-dependent manner through activation of Rac1. Functionally, potent inhibitor of osteoclastic bone resorption. In Homo sapiens (Human), this protein is Parathyroid hormone-related protein.